We begin with the raw amino-acid sequence, 1264 residues long: Kinesin-like protein KIN-14B (1264 aa).

Residues 1–10 (MAEQKSTNMW) show a composition bias toward polar residues. Residues 1–52 (MAEQKSTNMWNWEVTGFESKKSPSSEEGVHRTPSSMLRRYSIPKNSLPPHSS) are disordered. Positions 18–30 (ESKKSPSSEEGVH) are enriched in basic and acidic residues. Residues 53-84 (ELASKVQSLKDKVQLAKDDYVGLRQEATDLQE) adopt a coiled-coil conformation. The Kinesin motor domain occupies 138–452 (NVKVFCRARP…LNYAARARNT (315 aa)). 219–226 (GQTHAGKT) is a binding site for ATP. 3 coiled-coil regions span residues 462 to 511 (IKKW…YNEV), 545 to 592 (QLRN…LKSD), and 617 to 640 (TKKL…ENEK). Residues 588–615 (ALKSDMTRSRDPLEPQPRAAENTLDSSA) form a disordered region. Residues 589–600 (LKSDMTRSRDPL) are compositionally biased toward basic and acidic residues. Low complexity predominate over residues 652-668 (SSTQVSSPSSKASPTVQ). Disordered stretches follow at residues 652 to 684 (SSTQ…SVDK) and 1117 to 1136 (PEQE…SISS).

The protein belongs to the TRAFAC class myosin-kinesin ATPase superfamily. Kinesin family. KIN-14 subfamily. As to quaternary structure, homodimer and heterodimer with KCA1. Interacts with CDKA-1. Interacts with At4g14310. As to expression, expressed in roots, leaves, stems and flowers.

The protein localises to the cell membrane. Kinesin-like protein required for chloroplast movements and anchor to the plasma membrane. Mediates chloroplast movement via chloroplast actin (cp-actin) filaments. Required for the chloroplast avoidance response under high intensity blue light. Mediates redundantly with CHUP1 the nuclear avoidance response under high intensity blue light. May be involved in division plane determination. In Arabidopsis thaliana (Mouse-ear cress), this protein is Kinesin-like protein KIN-14B.